The primary structure comprises 308 residues: MTSKLDQLKKFTTVVADTGDFGAIKSLEPEDATTNPSLLLKAASDVNNAQMLADAFSGAKGDIGLACDRFAVAIGQEILKVVPGRVSTEVDARLSFDTNALIERSERLIGLYDAAGIKRDRVLIKLAATWEGIRAAEKLEKDGIQTNLTLLFSFAQAIACAEAGVFLISPFVGRIYDWYKKSSGTDYVGAEDPGVQSVTRIYNYYKANDFKTVVMGASFRNLNQIEQLAGCDRLTISTDLLKKLAEDTGTLERKLAPGNAGEARQSLTESQFRWASNEDAMATEKLAEGIRQFARDQEKLEALLSAKA.

K125 acts as the Schiff-base intermediate with substrate in catalysis.

Belongs to the transaldolase family. Type 1 subfamily. In terms of assembly, homodimer.

The protein resides in the cytoplasm. It catalyses the reaction D-sedoheptulose 7-phosphate + D-glyceraldehyde 3-phosphate = D-erythrose 4-phosphate + beta-D-fructose 6-phosphate. Its pathway is carbohydrate degradation; pentose phosphate pathway; D-glyceraldehyde 3-phosphate and beta-D-fructose 6-phosphate from D-ribose 5-phosphate and D-xylulose 5-phosphate (non-oxidative stage): step 2/3. Its function is as follows. Transaldolase is important for the balance of metabolites in the pentose-phosphate pathway. The protein is Transaldolase of Pseudomonas savastanoi pv. phaseolicola (strain 1448A / Race 6) (Pseudomonas syringae pv. phaseolicola (strain 1448A / Race 6)).